Consider the following 272-residue polypeptide: sn-1 stearoyl-lipid 9-desaturase (272 aa).

2 helical membrane-spanning segments follow: residues 11–31 (INWVNTLFFLGLHIGALFAFI) and 39–59 (AVGVALLLYWITGGLGITLGF). Residues 60–65 (HRLVTH) carry the Histidine box-1 motif. The Histidine box-2 motif lies at 97-101 (HRIHH). The chain crosses the membrane as a helical span at residues 160 to 180 (IALGLLLLYLGGWSFVVWGVF). A Histidine box-3 motif is present at residues 230 to 234 (HHAFQ).

It belongs to the fatty acid desaturase type 2 family. It depends on Fe(2+) as a cofactor.

It is found in the membrane. It catalyses the reaction a 1-octadecanoyl 2-acyl-glycerolipid + 2 reduced [2Fe-2S]-[ferredoxin] + O2 + 2 H(+) = a 1-[(9Z)-octadecenoyl]-2-acyl-glycerolipid + 2 oxidized [2Fe-2S]-[ferredoxin] + 2 H2O. It participates in lipid metabolism; polyunsaturated fatty acid biosynthesis. Its function is as follows. Desaturase involved in fatty acid biosynthesis. Introduces a double bond at carbon 9 of stearoyl groups (18:0) attached to the sn-1 position of the glycerol moiety of membrane glycerolipids. Does not desaturate palmitic acid (16:0), palmitoleic acid (16:1) and cis-vaccenic acid (18:1). The chain is sn-1 stearoyl-lipid 9-desaturase from Anabaena variabilis.